A 117-amino-acid polypeptide reads, in one-letter code: MGSYSFPKTERLLKRADFLKLSRSGRTKQTRYFIAAMLGSETDTTRLGITVSKRVGNAVERNRIKRIVRDYYRLNRDTISGNRDINIIARKYVASLNNREVRDELGKLFKKIVRSDG.

The protein belongs to the RnpA family. As to quaternary structure, consists of a catalytic RNA component (M1 or rnpB) and a protein subunit.

The enzyme catalyses Endonucleolytic cleavage of RNA, removing 5'-extranucleotides from tRNA precursor.. Functionally, RNaseP catalyzes the removal of the 5'-leader sequence from pre-tRNA to produce the mature 5'-terminus. It can also cleave other RNA substrates such as 4.5S RNA. The protein component plays an auxiliary but essential role in vivo by binding to the 5'-leader sequence and broadening the substrate specificity of the ribozyme. The chain is Ribonuclease P protein component from Desulforapulum autotrophicum (strain ATCC 43914 / DSM 3382 / VKM B-1955 / HRM2) (Desulfobacterium autotrophicum).